Here is a 241-residue protein sequence, read N- to C-terminus: Ubiquinone biosynthesis O-methyltransferase (241 aa).

Residues Arg-46, Gly-66, Asp-87, and Met-131 each coordinate S-adenosyl-L-methionine.

The protein belongs to the methyltransferase superfamily. UbiG/COQ3 family.

It carries out the reaction a 3-demethylubiquinol + S-adenosyl-L-methionine = a ubiquinol + S-adenosyl-L-homocysteine + H(+). It catalyses the reaction a 3-(all-trans-polyprenyl)benzene-1,2-diol + S-adenosyl-L-methionine = a 2-methoxy-6-(all-trans-polyprenyl)phenol + S-adenosyl-L-homocysteine + H(+). The protein operates within cofactor biosynthesis; ubiquinone biosynthesis. Functionally, O-methyltransferase that catalyzes the 2 O-methylation steps in the ubiquinone biosynthetic pathway. This chain is Ubiquinone biosynthesis O-methyltransferase, found in Bordetella parapertussis (strain 12822 / ATCC BAA-587 / NCTC 13253).